The following is a 251-amino-acid chain: Protein TK1472 (251 aa).

This sequence belongs to the CinA family.

The protein is Protein TK1472 of Thermococcus kodakarensis (strain ATCC BAA-918 / JCM 12380 / KOD1) (Pyrococcus kodakaraensis (strain KOD1)).